Here is a 192-residue protein sequence, read N- to C-terminus: Probable thymidylate kinase (192 aa).

7 to 14 (GIDGAGKS) provides a ligand contact to ATP.

Belongs to the thymidylate kinase family.

The enzyme catalyses dTMP + ATP = dTDP + ADP. The polypeptide is Probable thymidylate kinase (Methanobrevibacter smithii (strain ATCC 35061 / DSM 861 / OCM 144 / PS)).